Consider the following 583-residue polypeptide: Ankyrin repeat-containing protein NPR4 (583 aa).

ANK repeat units follow at residues 68–97 (HNDTDLHVAARGGDAGALRRALDEAAAAVA), 119–148 (AGETPLVAAAERGHLEVVRELLRHLDAEGV), 154–183 (SGYDALHVAAREGRHAVVQEMLLHNRLLAK), 188–218 (ANTSPLISAATRGHTEVVKLLLELDDFGLVE), 223–252 (NGKNSLHFAARQGHVEIVKALLEKDPQLAR), 257–286 (KGQTALHMAVKGTNCDVLRALVDADPAIVM), and 291–321 (NGNTALHVATRKKRAEIVAVLLRLPDTHVNA). The next 4 membrane-spanning stretches (helical) occupy residues 414 to 434 (VTVVAVLFATVAFAAIFTVPG), 452 to 472 (IFFIFNAIALFTSLAVVVVQI), 492 to 512 (LMWLASVCTTISFIASCYIVL), and 518 to 538 (WAALLVSLIGGITMAGVLGTM).

Its subcellular location is the cell membrane. Functionally, involved in salt stress tolerance. In Oryza sativa subsp. japonica (Rice), this protein is Ankyrin repeat-containing protein NPR4.